The sequence spans 704 residues: Elongation factor G (704 aa).

Residues Ala8 to Val290 enclose the tr-type G domain. GTP is bound by residues Ala17–Thr24, Asp88–His92, and Asn142–Asp145.

It belongs to the TRAFAC class translation factor GTPase superfamily. Classic translation factor GTPase family. EF-G/EF-2 subfamily.

It localises to the cytoplasm. Functionally, catalyzes the GTP-dependent ribosomal translocation step during translation elongation. During this step, the ribosome changes from the pre-translocational (PRE) to the post-translocational (POST) state as the newly formed A-site-bound peptidyl-tRNA and P-site-bound deacylated tRNA move to the P and E sites, respectively. Catalyzes the coordinated movement of the two tRNA molecules, the mRNA and conformational changes in the ribosome. This Salmonella arizonae (strain ATCC BAA-731 / CDC346-86 / RSK2980) protein is Elongation factor G.